Reading from the N-terminus, the 140-residue chain is Short-chain diamines transporter (140 aa).

Helical transmembrane passes span 7 to 27 (IFHAVLFELMALAIIVPAAAL), 36 to 56 (LALVGIGLSLYTVVWNYIYNL), 79 to 99 (VGFEGGLIFISIPVIAWFLEI), and 105 to 125 (LMLEAGFLVFFLFYATGFNWL).

The protein belongs to the proteobacterial antimicrobial compound efflux (PACE) (TC 2.A.117) family.

The protein localises to the cell inner membrane. Its function is as follows. Mediates the efflux of short-chain diamines when energized by an electrochemical gradient. Confers resistance to chlorhexidine, benzalkonium, proflavine and acriflavine. Mediates efflux of both proflavine and acriflavine via an energy-dependent mechanism. This Vibrio parahaemolyticus serotype O3:K6 (strain RIMD 2210633) protein is Short-chain diamines transporter.